The primary structure comprises 258 residues: 6-phosphogluconolactonase (258 aa).

A2 is modified (N-acetylalanine). S49 bears the Phosphoserine mark. K180 is modified (N6-acetyllysine).

The protein belongs to the glucosamine/galactosamine-6-phosphate isomerase family. 6-phosphogluconolactonase subfamily.

The protein localises to the cytoplasm. It catalyses the reaction 6-phospho-D-glucono-1,5-lactone + H2O = 6-phospho-D-gluconate + H(+). Its pathway is carbohydrate degradation; pentose phosphate pathway; D-ribulose 5-phosphate from D-glucose 6-phosphate (oxidative stage): step 2/3. In terms of biological role, hydrolysis of 6-phosphogluconolactone to 6-phosphogluconate. This chain is 6-phosphogluconolactonase, found in Homo sapiens (Human).